The primary structure comprises 376 residues: Multiphosphoryl transfer protein (376 aa).

The region spanning 2-142 is the PTS EIIA type-2 domain; sequence FQLSVQDIHP…EELRALLMGE (141 aa). The active-site Tele-phosphohistidine intermediate; for EIIA activity is the His-62. Position 62 is a phosphohistidine; by HPr (His-62). The segment at 156 to 284 is m domain; sequence TLDVIASSLV…LTSDDALTDD (129 aa). In terms of domain architecture, HPr spans 285-375; it reads VLSAEFVVRN…DAIAAGLGEG (91 aa). His-299 acts as the Pros-phosphohistidine intermediate; for HPr activity in catalysis. Position 299 is a phosphohistidine; by EI (His-299).

Its subcellular location is the cytoplasm. In terms of biological role, the phosphoenolpyruvate-dependent sugar phosphotransferase system (sugar PTS), a major carbohydrate active transport system, catalyzes the phosphorylation of incoming sugar substrates concomitantly with their translocation across the cell membrane. The enzyme II FruAB PTS system is involved in fructose transport. The protein is Multiphosphoryl transfer protein (fruB) of Salmonella typhi.